The chain runs to 223 residues: ATP synthase subunit a 1 (223 aa).

A run of 5 helical transmembrane segments spans residues 20–40, 78–98, 108–128, 174–194, and 196–216; these read LTIA…AFAS, YLPY…CTII, LSTT…FGIA, MILA…MSVL, and LLTG…YISA.

Belongs to the ATPase A chain family. In terms of assembly, F-type ATPases have 2 components, CF(1) - the catalytic core - and CF(0) - the membrane proton channel. CF(1) has five subunits: alpha(3), beta(3), gamma(1), delta(1), epsilon(1). CF(0) has four main subunits: a, b, b' and c.

The protein resides in the cell inner membrane. Functionally, key component of the proton channel; it plays a direct role in the translocation of protons across the membrane. In Chlorobium luteolum (strain DSM 273 / BCRC 81028 / 2530) (Pelodictyon luteolum), this protein is ATP synthase subunit a 1.